The following is a 563-amino-acid chain: F-box/kelch-repeat protein At5g42350 (563 aa).

Residues 129 to 175 enclose the F-box domain; the sequence is YRKHVYLPDDILEMCLMRLPLTSLLNAHLVCKKWQSMANTQRFLQMR. 3 Kelch repeats span residues 184 to 231, 232 to 282, and 355 to 402; these read WLFL…SIHE, EIYI…ATEV, and VLIA…IICN.

The polypeptide is F-box/kelch-repeat protein At5g42350 (Arabidopsis thaliana (Mouse-ear cress)).